Here is a 179-residue protein sequence, read N- to C-terminus: Large ribosomal subunit protein uL10 (179 aa).

Belongs to the universal ribosomal protein uL10 family. In terms of assembly, part of the ribosomal stalk of the 50S ribosomal subunit. The N-terminus interacts with L11 and the large rRNA to form the base of the stalk. The C-terminus forms an elongated spine to which L12 dimers bind in a sequential fashion forming a multimeric L10(L12)X complex.

Its function is as follows. Forms part of the ribosomal stalk, playing a central role in the interaction of the ribosome with GTP-bound translation factors. The polypeptide is Large ribosomal subunit protein uL10 (Symbiobacterium thermophilum (strain DSM 24528 / JCM 14929 / IAM 14863 / T)).